A 351-amino-acid polypeptide reads, in one-letter code: DNA polymerase IV (351 aa).

The 185-residue stretch at Ile-3–Gly-187 folds into the UmuC domain. Mg(2+) contacts are provided by Asp-7 and Asp-105. The active site involves Glu-106.

Belongs to the DNA polymerase type-Y family. Mg(2+) serves as cofactor.

The catalysed reaction is DNA(n) + a 2'-deoxyribonucleoside 5'-triphosphate = DNA(n+1) + diphosphate. Functionally, poorly processive, error-prone DNA polymerase involved in untargeted mutagenesis. Copies undamaged DNA at stalled replication forks, which arise in vivo from mismatched or misaligned primer ends. These misaligned primers can be extended by PolIV. Exhibits no 3'-5' exonuclease (proofreading) activity. May be involved in translesional synthesis. The sequence is that of DNA polymerase IV from Sulfurisphaera tokodaii (strain DSM 16993 / JCM 10545 / NBRC 100140 / 7) (Sulfolobus tokodaii).